The sequence spans 2255 residues: Non-reducing polyketide synthase nvfA (2255 aa).

The interval 13 to 251 is N-terminal acylcarrier protein transacylase domain (SAT); sequence ILFGPQSSDM…HHPDHTAAVE (239 aa). In terms of domain architecture, Ketosynthase family 3 (KS3) spans 365–781; it reads VRPIAVTGMA…GSNAAIVLRQ (417 aa). Residues Cys-530, His-665, and His-704 each act as for beta-ketoacyl synthase activity in the active site. The malonyl-CoA:ACP transacylase (MAT) domain stretch occupies residues 887 to 1187; the sequence is LCFGGQNGNT…QASDLKSPQA (301 aa). Ser-974 acts as the For acyl/malonyl transferase activity in catalysis. The tract at residues 1229 to 1357 is N-terminal hotdog fold; that stretch reads EPMGLVQVLE…GRISLHPFDS (129 aa). Positions 1229-1536 constitute a PKS/mFAS DH domain; that stretch reads EPMGLVQVLE…FTSVSIRALT (308 aa). The tract at residues 1232-1535 is product template (PT) domain; sequence GLVQVLEKRP…TFTSVSIRAL (304 aa). The Proton acceptor; for dehydratase activity role is filled by His-1262. The interval 1385-1536 is C-terminal hotdog fold; sequence SSSGLKGSAV…FTSVSIRALT (152 aa). Catalysis depends on Asp-1443, which acts as the Proton donor; for dehydratase activity. Positions 1581 to 1655 constitute a Carrier domain; it reads TNKFPAIQAM…CLVQAIFPGA (75 aa). Ser-1615 bears the O-(pantetheine 4'-phosphoryl)serine mark. The tract at residues 1809 to 2042 is methyltransferase (CMeT) domain; it reads HHASEHTLLR…GYNWVNWSCN (234 aa). Positions 2109–2227 are thioesterase (TE) domain; sequence LLIHGGGHVM…ILSFYCPTDY (119 aa). Ser-2194 functions as the For thioesterase activity in the catalytic mechanism.

It carries out the reaction 3 malonyl-CoA + acetyl-CoA + 2 S-adenosyl-L-methionine = 3,5-dimethylorsellinate + 2 S-adenosyl-L-homocysteine + 3 CO2 + 4 CoA. Its pathway is secondary metabolite biosynthesis; terpenoid biosynthesis. Functionally, non-reducing polyketide synthase; part of the gene cluster that mediates the biosynthesis of novofumigatonin, a heavily oxygenated meroterpenoid containing a unique orthoester moiety. The first step of the pathway is the synthesis of 3,5-dimethylorsellinic acid (DMOA) by the polyketide synthase nvfA via condensation of one acetyl-CoA starter unit with 3 malonyl-CoA units and 2 methylations. DMOA is then converted to farnesyl-DMOA by the farnesyltransferase nvfB. Epoxydation by FAD-dependent monooxygenase nvfK, followed by a protonation-initiated cyclization catalyzed by the terpene cyclase nvfL leads to the production of asnavolin H. The short chain dehydrogenase nvfC then as a 3-OH dehydrogenase of asnovolin H to yield chemesin D. There are two branches to synthesize asnovolin A from chemesin D. In one branch, chemesin D undergoes Baeyer-Villiger oxidation by nvfH, methylation by nvfJ, and enoyl reduction by the nvfM D enoylreductase that reduces the double bond between C-5'and C-6', to form respectively asnovolin I, asnovolin K, and asnovolin A. In the other branch, the methylation precedes the Baeyer-Villiger oxidation and the enoyl reduction to yield asnovolin A via the asnovolin J intermediate. Asnovolin A is further converted to fumigatonoid A by the Fe(II)/2-oxoglutarate-dependent dioxygenase nvfI that catalyzes an endoperoxidation reaction. The alpha/beta hydrolase nvfD then acts as an epimerase that converts fumigatonoid A to its C-5' epimer, which then undergoes spontaneous or nvfD-catalyzed lactonization. The following step utilizes the ketoreductase nvfG to produce fumigatonoid B. The dioxygenase nvfE further converts fumigatonoid B into fumigatonoid C. Finally the Fe(II)/2-oxoglutarate-dependent dioxygenase nvfF catalyzes two rounds of oxidation to transform fumigatonoid C into the end product, novofumigatonin A. This Aspergillus novofumigatus (strain IBT 16806) protein is Non-reducing polyketide synthase nvfA.